We begin with the raw amino-acid sequence, 386 residues long: Glyceraldehyde-3-phosphate dehydrogenase, chloroplastic (386 aa).

The transit peptide at 1-45 (MAYFKAVAYLAALASAAAFNPGSSFVPRLNAPATQPKAAKMTGPT) directs the protein to the chloroplast. Residues 58 to 59 (RI) and R125 contribute to the NADP(+) site. Residues 197–199 (SCT), T228, 257–258 (TG), and R280 contribute to the D-glyceraldehyde 3-phosphate site. C198 acts as the Nucleophile in catalysis. N362 is a binding site for NADP(+).

The protein belongs to the glyceraldehyde-3-phosphate dehydrogenase family. In terms of assembly, homotetramer.

It localises to the plastid. Its subcellular location is the chloroplast. It catalyses the reaction D-glyceraldehyde 3-phosphate + phosphate + NADP(+) = (2R)-3-phospho-glyceroyl phosphate + NADPH + H(+). It carries out the reaction D-glyceraldehyde 3-phosphate + phosphate + NAD(+) = (2R)-3-phospho-glyceroyl phosphate + NADH + H(+). Its pathway is carbohydrate biosynthesis; Calvin cycle. This is Glyceraldehyde-3-phosphate dehydrogenase, chloroplastic (GAPC1) from Guillardia theta (Cryptophyte).